A 451-amino-acid polypeptide reads, in one-letter code: MATTAQYLPRGPGGGAGGTGPLMHPDAAAAAAAAAAAERLHAGAAYREVQKLMHHEWLGAGAGHPVGLAHPQWLPTGGGGGGDWAGGPHLEHGKAGGGGTGRADDGGGGGGFHARLVHQGAAHAGAAWAQGSTAHHLGPAMSPSPGASGGHQPQPLGLYAQAAYPGGGGGGLAGMLAAGGGGAGPGLHHALHEDGHEAQLEPSPPPHLGAHGHAHGHAHAGGLHAAAAHLHPGAGGGGSSVGEHSDEDAPSSDDLEQFAKQFKQRRIKLGFTQADVGLALGTLYGNVFSQTTICRFEALQLSFKNMCKLKPLLNKWLEETDSSSGSPTNLDKIAAQGRKRKKRTSIEVGVKGALESHFLKCPKPSAHEITGLADSLQLEKEVVRVWFCNRRQKEKRMTPAAGAGHPPMDDVYAPGELGPGGGGASPPSAPPPPPPAALHHHHHHTLPGSVQ.

Disordered stretches follow at residues 1–21 (MATT…GTGP), 69–114 (AHPQ…GFHA), 127–154 (AWAQ…HQPQ), 186–253 (GLHH…PSSD), and 395–451 (KRMT…GSVQ). Composition is skewed to gly residues over residues 11–20 (GPGGGAGGTG), 76–85 (TGGGGGGDWA), and 95–112 (AGGG…GGGF). Positions 190 to 199 (ALHEDGHEAQ) are enriched in basic and acidic residues. Residues 220–232 (AGGLHAAAAHLHP) are compositionally biased toward low complexity. The POU-specific domain maps to 247–321 (EDAPSSDDLE…LLNKWLEETD (75 aa)). The homeobox DNA-binding region spans 339–398 (KRKKRTSIEVGVKGALESHFLKCPKPSAHEITGLADSLQLEKEVVRVWFCNRRQKEKRMT). Over residues 427–436 (PSAPPPPPPA) the composition is skewed to pro residues.

It belongs to the POU transcription factor family. Class-3 subfamily. Expressed in embryonal stem cells and in the developing brain.

It localises to the nucleus. Its function is as follows. Transcription factor that binds to the octamer motif (5'-ATTTGCAT-3'). Acts as a transcriptional activator when binding cooperatively with SOX4, SOX11, or SOX12 to gene promoters. Acts as a transcriptional repressor of myelin-specific genes. This chain is POU domain, class 3, transcription factor 1 (POU3F1), found in Homo sapiens (Human).